The primary structure comprises 162 residues: AP-1 complex subunit sigma-2 (162 aa).

The protein belongs to the adaptor complexes small subunit family. Adaptor protein complex 1 (AP-1) is a heterotetramer composed of two large adaptins (gamma-type subunit and beta-type subunit), a medium adaptin (mu-type subunit) and a small adaptin (sigma-type subunit). In terms of tissue distribution, expressed in roots, stems, leaves, flowers and siliques (developing fruits and seeds).

The protein localises to the golgi apparatus. It localises to the cytoplasmic vesicle. The protein resides in the clathrin-coated vesicle membrane. Subunit of clathrin-associated adaptor protein complex 1 that plays a role in protein sorting at the trans-Golgi network and early endosomes (TGN/EE). The AP complexes mediate the recruitment of clathrin to membranes and the recognition of sorting signals within the cytosolic tails of transmembrane cargo molecules. The polypeptide is AP-1 complex subunit sigma-2 (AAP19-2) (Arabidopsis thaliana (Mouse-ear cress)).